A 1037-amino-acid chain; its full sequence is Probable aminoglycoside efflux pump (1037 aa).

Residues 1–9 (MANFFIDRP) lie on the Cytoplasmic side of the membrane. The chain crosses the membrane as a helical span at residues 10–28 (IFAWVLAILLCLTGTLAIF). At 29 to 339 (SLPVEQYPDL…TSFVKASIED (311 aa)) the chain is on the periplasmic side. Residues 340-359 (VVKTLLEAIALVFLVMYLFL) traverse the membrane as a helical segment. The Cytoplasmic segment spans residues 360–365 (QNFRAT). The helical transmembrane segment at 366 to 385 (LIPTIAVPVVLMGTFSVLYA) threads the bilayer. At 386–391 (FGYSVN) the chain is on the periplasmic side. Residues 392–413 (TLTMFAMVLAIGLLVDDAIVVV) traverse the membrane as a helical segment. Topologically, residues 414–441 (ENVERIMSEEGLTPREATRKSMGQIQGA) are cytoplasmic. The helical transmembrane segment at 442 to 460 (LVGIAMVLSAVFVPMAFFG) threads the bilayer. Residues 461-473 (GTTGAIYRQFSIT) are Periplasmic-facing. The helical transmembrane segment at 474–496 (IVAAMVLSVLVAMILTPALCATL) threads the bilayer. At 497 to 537 (LKPLKKGEHHGQKGFFAWFNQMFNRNAERYEKGVAKILHRS) the chain is on the cytoplasmic side. The helical transmembrane segment at 538–556 (LRWIVIYVLLLGGMVFLFL) threads the bilayer. The Periplasmic segment spans residues 557–870 (RLPTSFLPLE…SYQERLSGAQ (314 aa)). A helical membrane pass occupies residues 871–890 (APALYAISLLVVFLCLAALY). Over 891–896 (ESWSVP) the chain is Cytoplasmic. Residues 897 to 916 (FSVMLVVPLGVIGALLATWM) traverse the membrane as a helical segment. At 917-922 (RGLEND) the chain is on the periplasmic side. Residues 923 to 944 (VYFQVGLLTVIGLSAKNAILIV) traverse the membrane as a helical segment. Residues 945–971 (EFANEMNQKGHDLFEATLHACRQRLRP) are Cytoplasmic-facing. Residues 972-990 (ILMTSLAFIFGVLPMATST) traverse the membrane as a helical segment. At 991–1003 (GAGSGGQHAVGTG) the chain is on the periplasmic side. The helical transmembrane segment at 1004-1026 (VMGGMISATILAIYFVPLFFVLV) threads the bilayer. The Cytoplasmic portion of the chain corresponds to 1027–1037 (RRRFPLKPRPE).

Belongs to the resistance-nodulation-cell division (RND) (TC 2.A.6) family.

The protein localises to the cell inner membrane. Its function is as follows. Participates in the efflux of aminoglycosides. Confers resistance to a variety of these substances. This Escherichia coli (strain K12) protein is Probable aminoglycoside efflux pump (acrD).